The following is a 503-amino-acid chain: Sodium/hydrogen exchanger 3 (503 aa).

At 1 to 22 (MVIGLSTMLEKTEALFASDHAS) the chain is on the cytoplasmic side. Residues 23–43 (VVSMNLFVALLCACIVLGHLL) traverse the membrane as a helical segment. The Vacuolar portion of the chain corresponds to 44-51 (EETRWMNE). An N-linked (GlcNAc...) asparagine glycan is attached at N50. Residues 52–72 (SITALIIGSCTGIVILLISGG) traverse the membrane as a helical segment. The Cytoplasmic segment spans residues 73-76 (KSSR). The segment at residues 77–97 (ILVFSEDLFFIYLLPPIIFNA) is an intramembrane region (helical). At 98 to 109 (GFQVKKKQFFRN) the chain is on the cytoplasmic side. The chain crosses the membrane as a helical span at residues 110–130 (FMTIMLFGAIGTLISFVIISF). Topologically, residues 131–138 (GAKHLFEK) are vacuolar. Residues 139–159 (MNIGDLTIADYLAIGAIFSAT) form a helical membrane-spanning segment. The Cytoplasmic portion of the chain corresponds to 160 to 174 (DSVCTLQVLNQDETP). A helical membrane pass occupies residues 175–195 (LLYSLVFGEGVVNDATSVVLF). The Vacuolar segment spans residues 196–219 (NAIQRFDLTNINSAIALEFAGNFF). The helical transmembrane segment at 220–240 (YLFILSTALGVAAGLLSAFVI) threads the bilayer. Residues 241–265 (KKLYIGRHSTDREVALMMLLAYLSY) are Cytoplasmic-facing. Residues 266–286 (MLAELFHLSSILTVFFCGIVM) traverse the membrane as a helical segment. Over 287–305 (SHYTWHNVTDKSKVTTKHT) the chain is Vacuolar. The N-linked (GlcNAc...) asparagine glycan is linked to N293. The chain crosses the membrane as a helical span at residues 306–326 (FAAMSFLAEIFIFLYVGMDAL). The Cytoplasmic portion of the chain corresponds to 327–345 (DIEKWDVVRNSPGQSIGVS). A helical transmembrane segment spans residues 346–366 (SILLGLILLGRAAFVFPLSFL). Residues 367 to 383 (SNLTKSSPDEKIDLKKQ) lie on the Vacuolar side of the membrane. An N-linked (GlcNAc...) asparagine glycan is attached at N368. Residues 384–406 (VTIWWAGLMRGAVSMALAYNQFT) traverse the membrane as a helical segment. The Cytoplasmic segment spans residues 407–416 (TSGHTKVLGN). A helical transmembrane segment spans residues 417–437 (AIMITSTITVVLFSTVVFGLL). Topologically, residues 438–503 (TKPLVKHLQP…FWKSPSRFTH (66 aa)) are vacuolar.

The protein belongs to the monovalent cation:proton antiporter 1 (CPA1) transporter (TC 2.A.36) family. As to expression, expressed in roots.

The protein resides in the vacuole membrane. The enzyme catalyses Na(+)(in) + H(+)(out) = Na(+)(out) + H(+)(in). It carries out the reaction K(+)(in) + H(+)(out) = K(+)(out) + H(+)(in). In terms of biological role, may act in low affinity electroneutral exchange of protons for cations such as Na(+) or K(+) across membranes. May also exchange Li(+) and Cs(+) with a lower affinity. In Arabidopsis thaliana (Mouse-ear cress), this protein is Sodium/hydrogen exchanger 3 (NHX3).